Reading from the N-terminus, the 295-residue chain is Lectin 11 (295 aa).

The Cytoplasmic portion of the chain corresponds to methionine 1–lysine 22. The chain crosses the membrane as a helical span at residues leucine 23–alanine 45. The Extracellular portion of the chain corresponds to asparagine 46 to methionine 295. N-linked (GlcNAc...) asparagine glycosylation is present at asparagine 152.

It belongs to the leguminous lectin family.

It is found in the membrane. Its function is as follows. May be involved in arbuscular mycorrhizal (AM) symbiosis with AM fungi. This Medicago truncatula (Barrel medic) protein is Lectin 11.